The primary structure comprises 275 residues: Type III pantothenate kinase (275 aa).

9 to 16 (DIGNTRLK) serves as a coordination point for ATP. Residues tyrosine 114 and 121–124 (GVDR) each bind substrate. The active-site Proton acceptor is aspartate 123. Residue threonine 147 participates in ATP binding. Threonine 209 is a binding site for substrate.

It belongs to the type III pantothenate kinase family. Homodimer. The cofactor is NH4(+). K(+) serves as cofactor.

Its subcellular location is the cytoplasm. It catalyses the reaction (R)-pantothenate + ATP = (R)-4'-phosphopantothenate + ADP + H(+). It participates in cofactor biosynthesis; coenzyme A biosynthesis; CoA from (R)-pantothenate: step 1/5. Catalyzes the phosphorylation of pantothenate (Pan), the first step in CoA biosynthesis. In Cupriavidus pinatubonensis (strain JMP 134 / LMG 1197) (Cupriavidus necator (strain JMP 134)), this protein is Type III pantothenate kinase.